Here is a 69-residue protein sequence, read N- to C-terminus: uncharacterized protein (69 aa).

The stretch at 21–64 (LNLLKGGEEKISEVELKLDEMEKKMDSLLVQLEDLHRDNNDLAK) forms a coiled coil.

This is an uncharacterized protein from Saccharomyces cerevisiae (strain ATCC 204508 / S288c) (Baker's yeast).